Reading from the N-terminus, the 293-residue chain is Elongation factor Ts (293 aa).

An involved in Mg(2+) ion dislocation from EF-Tu region spans residues 79-82; that stretch reads TDFV.

The protein belongs to the EF-Ts family.

It localises to the cytoplasm. Functionally, associates with the EF-Tu.GDP complex and induces the exchange of GDP to GTP. It remains bound to the aminoacyl-tRNA.EF-Tu.GTP complex up to the GTP hydrolysis stage on the ribosome. The sequence is that of Elongation factor Ts from Exiguobacterium sibiricum (strain DSM 17290 / CCUG 55495 / CIP 109462 / JCM 13490 / 255-15).